The chain runs to 443 residues: Glucose-6-phosphate isomerase (443 aa).

Catalysis depends on glutamate 285, which acts as the Proton donor. Catalysis depends on residues histidine 306 and lysine 420.

The protein belongs to the GPI family.

The protein resides in the cytoplasm. It catalyses the reaction alpha-D-glucose 6-phosphate = beta-D-fructose 6-phosphate. The protein operates within carbohydrate biosynthesis; gluconeogenesis. It participates in carbohydrate degradation; glycolysis; D-glyceraldehyde 3-phosphate and glycerone phosphate from D-glucose: step 2/4. Functionally, catalyzes the reversible isomerization of glucose-6-phosphate to fructose-6-phosphate. This Staphylococcus saprophyticus subsp. saprophyticus (strain ATCC 15305 / DSM 20229 / NCIMB 8711 / NCTC 7292 / S-41) protein is Glucose-6-phosphate isomerase.